Here is a 257-residue protein sequence, read N- to C-terminus: Imidazole glycerol phosphate synthase subunit HisF (257 aa).

Catalysis depends on residues Asp-12 and Asp-131.

It belongs to the HisA/HisF family. As to quaternary structure, heterodimer of HisH and HisF.

The protein localises to the cytoplasm. It carries out the reaction 5-[(5-phospho-1-deoxy-D-ribulos-1-ylimino)methylamino]-1-(5-phospho-beta-D-ribosyl)imidazole-4-carboxamide + L-glutamine = D-erythro-1-(imidazol-4-yl)glycerol 3-phosphate + 5-amino-1-(5-phospho-beta-D-ribosyl)imidazole-4-carboxamide + L-glutamate + H(+). Its pathway is amino-acid biosynthesis; L-histidine biosynthesis; L-histidine from 5-phospho-alpha-D-ribose 1-diphosphate: step 5/9. Functionally, IGPS catalyzes the conversion of PRFAR and glutamine to IGP, AICAR and glutamate. The HisF subunit catalyzes the cyclization activity that produces IGP and AICAR from PRFAR using the ammonia provided by the HisH subunit. The sequence is that of Imidazole glycerol phosphate synthase subunit HisF from Burkholderia multivorans (strain ATCC 17616 / 249).